Here is a 249-residue protein sequence, read N- to C-terminus: Imidazole glycerol phosphate synthase subunit HisF (249 aa).

Catalysis depends on residues Asp-11 and Asp-130.

This sequence belongs to the HisA/HisF family. In terms of assembly, heterodimer of HisH and HisF.

Its subcellular location is the cytoplasm. The catalysed reaction is 5-[(5-phospho-1-deoxy-D-ribulos-1-ylimino)methylamino]-1-(5-phospho-beta-D-ribosyl)imidazole-4-carboxamide + L-glutamine = D-erythro-1-(imidazol-4-yl)glycerol 3-phosphate + 5-amino-1-(5-phospho-beta-D-ribosyl)imidazole-4-carboxamide + L-glutamate + H(+). Its pathway is amino-acid biosynthesis; L-histidine biosynthesis; L-histidine from 5-phospho-alpha-D-ribose 1-diphosphate: step 5/9. Functionally, IGPS catalyzes the conversion of PRFAR and glutamine to IGP, AICAR and glutamate. The HisF subunit catalyzes the cyclization activity that produces IGP and AICAR from PRFAR using the ammonia provided by the HisH subunit. In Exiguobacterium sibiricum (strain DSM 17290 / CCUG 55495 / CIP 109462 / JCM 13490 / 255-15), this protein is Imidazole glycerol phosphate synthase subunit HisF.